Reading from the N-terminus, the 301-residue chain is Aspartate carbamoyltransferase catalytic subunit (301 aa).

Positions 46 and 47 each coordinate carbamoyl phosphate. Position 74 (Lys-74) interacts with L-aspartate. Positions 96, 124, and 127 each coordinate carbamoyl phosphate. L-aspartate is bound by residues Arg-157 and Arg-208. The carbamoyl phosphate site is built by Ala-249 and Pro-250.

This sequence belongs to the aspartate/ornithine carbamoyltransferase superfamily. ATCase family. Heterododecamer (2C3:3R2) of six catalytic PyrB chains organized as two trimers (C3), and six regulatory PyrI chains organized as three dimers (R2).

It carries out the reaction carbamoyl phosphate + L-aspartate = N-carbamoyl-L-aspartate + phosphate + H(+). It functions in the pathway pyrimidine metabolism; UMP biosynthesis via de novo pathway; (S)-dihydroorotate from bicarbonate: step 2/3. Catalyzes the condensation of carbamoyl phosphate and aspartate to form carbamoyl aspartate and inorganic phosphate, the committed step in the de novo pyrimidine nucleotide biosynthesis pathway. The chain is Aspartate carbamoyltransferase catalytic subunit from Bacillus cereus (strain ATCC 14579 / DSM 31 / CCUG 7414 / JCM 2152 / NBRC 15305 / NCIMB 9373 / NCTC 2599 / NRRL B-3711).